The chain runs to 50 residues: Large ribosomal subunit protein eL39 (50 aa).

It belongs to the eukaryotic ribosomal protein eL39 family.

The protein is Large ribosomal subunit protein eL39 of Methanosphaerula palustris (strain ATCC BAA-1556 / DSM 19958 / E1-9c).